A 1162-amino-acid chain; its full sequence is Eukaryotic translation initiation factor 2-alpha kinase (1162 aa).

The N-terminal stretch at 1 to 39 (MQDDLDGIVRHRRRSLSFLQIVTLTMAGLVAFDPAQVLA) is a signal peptide. Residues 40-537 (GHPTTDSELQ…DDIDAPVKVV (498 aa)) lie on the Lumenal side of the membrane. N-linked (GlcNAc...) asparagine glycosylation is found at Asn-193, Asn-260, Asn-353, Asn-461, Asn-505, and Asn-516. The tract at residues 498–517 (TAPTSPTNATSEGTEATGNH) is disordered. Residues 499–517 (APTSPTNATSEGTEATGNH) are compositionally biased toward polar residues. A helical transmembrane segment spans residues 538-558 (ILSLWFWWKEIVVIAFTSAVI). Residues 559–1162 (LNIFMGQRNQ…TFSSSSEPHQ (604 aa)) are Cytoplasmic-facing. Position 624 is a phosphoserine (Ser-624). Residues 642–1130 (FELMQCLGRG…LRNILQLPHL (489 aa)) form the Protein kinase domain. Residues 648–656 (LGRGGFGVV) and Lys-671 contribute to the ATP site. Phosphoserine is present on Ser-797. The tract at residues 801-839 (FRSESQSAALRAEEEDDTDDDYEEDEEQQGDHEKRHRSS) is disordered. Positions 813–828 (EEEDDTDDDYEEDEEQ) are enriched in acidic residues. Thr-818 is subject to Phosphothreonine. The Proton acceptor role is filled by Asp-980. Position 1028 is a phosphothreonine (Thr-1028). Residues 1135–1162 (QSEQAELAERARRLSRSRTFSSSSEPHQ) form a disordered region. A compositionally biased stretch (low complexity) spans 1151–1162 (SRTFSSSSEPHQ).

It belongs to the protein kinase superfamily. Ser/Thr protein kinase family. GCN2 subfamily. As to quaternary structure, forms dimers with HSPA5/BIP in resting cells. Oligomerizes in ER-stressed cells. Post-translationally, autophosphorylated. N-glycosylated.

Its subcellular location is the endoplasmic reticulum membrane. It catalyses the reaction L-seryl-[protein] + ATP = O-phospho-L-seryl-[protein] + ADP + H(+). It carries out the reaction L-threonyl-[protein] + ATP = O-phospho-L-threonyl-[protein] + ADP + H(+). Its activity is regulated as follows. Perturbation in protein folding in the endoplasmic reticulum (ER) promotes reversible dissociation from HSPA5/BIP and oligomerization, resulting in transautophosphorylation and kinase activity induction. Phosphorylates the alpha subunit of eukaryotic translation-initiation factor 2 (EIF2), leading to its inactivation and thus to a rapid reduction of translational initiation and repression of global protein synthesis. The protein is Eukaryotic translation initiation factor 2-alpha kinase (PEK) of Drosophila melanogaster (Fruit fly).